The sequence spans 226 residues: MKNIQKILPLYFVAGTQDCRHLGENLSENLLFVLKQALEGGITCFQFRDKGKFSLEHTPSAQKALAINCRDLCREYGVPFIVDDNVDLALAIEADGIHVGQSDMPVQEIRAKTDKPLIIGWSVNRLDEAKIGENLAEIDYFGIGPIFPTQSKENPKPTLGMAFIQTLRNAGITKPLVAIGGVKLAHVKTLREFGADGVAVITAITHADNVQAATKALREASDEYAK.

4-amino-2-methyl-5-(diphosphooxymethyl)pyrimidine is bound by residues Q46 to K50 and D83. Residues D84 and D103 each contribute to the Mg(2+) site. Residue S122 coordinates 4-amino-2-methyl-5-(diphosphooxymethyl)pyrimidine. T149–S151 serves as a coordination point for 2-[(2R,5Z)-2-carboxy-4-methylthiazol-5(2H)-ylidene]ethyl phosphate. K152 serves as a coordination point for 4-amino-2-methyl-5-(diphosphooxymethyl)pyrimidine. 2-[(2R,5Z)-2-carboxy-4-methylthiazol-5(2H)-ylidene]ethyl phosphate-binding positions include G181 and I201–T202.

Belongs to the thiamine-phosphate synthase family. It depends on Mg(2+) as a cofactor.

It catalyses the reaction 2-[(2R,5Z)-2-carboxy-4-methylthiazol-5(2H)-ylidene]ethyl phosphate + 4-amino-2-methyl-5-(diphosphooxymethyl)pyrimidine + 2 H(+) = thiamine phosphate + CO2 + diphosphate. The catalysed reaction is 2-(2-carboxy-4-methylthiazol-5-yl)ethyl phosphate + 4-amino-2-methyl-5-(diphosphooxymethyl)pyrimidine + 2 H(+) = thiamine phosphate + CO2 + diphosphate. The enzyme catalyses 4-methyl-5-(2-phosphooxyethyl)-thiazole + 4-amino-2-methyl-5-(diphosphooxymethyl)pyrimidine + H(+) = thiamine phosphate + diphosphate. The protein operates within cofactor biosynthesis; thiamine diphosphate biosynthesis; thiamine phosphate from 4-amino-2-methyl-5-diphosphomethylpyrimidine and 4-methyl-5-(2-phosphoethyl)-thiazole: step 1/1. Its function is as follows. Condenses 4-methyl-5-(beta-hydroxyethyl)thiazole monophosphate (THZ-P) and 2-methyl-4-amino-5-hydroxymethyl pyrimidine pyrophosphate (HMP-PP) to form thiamine monophosphate (TMP). The chain is Thiamine-phosphate synthase from Haemophilus influenzae (strain PittGG).